The following is a 418-amino-acid chain: Serine hydroxymethyltransferase (418 aa).

Residues Leu118 and 122–124 (GHL) each bind (6S)-5,6,7,8-tetrahydrofolate. N6-(pyridoxal phosphate)lysine is present on Lys227. Glu242 contacts (6S)-5,6,7,8-tetrahydrofolate.

Belongs to the SHMT family. Homodimer. The cofactor is pyridoxal 5'-phosphate.

It localises to the cytoplasm. The catalysed reaction is (6R)-5,10-methylene-5,6,7,8-tetrahydrofolate + glycine + H2O = (6S)-5,6,7,8-tetrahydrofolate + L-serine. It participates in one-carbon metabolism; tetrahydrofolate interconversion. Its pathway is amino-acid biosynthesis; glycine biosynthesis; glycine from L-serine: step 1/1. In terms of biological role, catalyzes the reversible interconversion of serine and glycine with tetrahydrofolate (THF) serving as the one-carbon carrier. This reaction serves as the major source of one-carbon groups required for the biosynthesis of purines, thymidylate, methionine, and other important biomolecules. Also exhibits THF-independent aldolase activity toward beta-hydroxyamino acids, producing glycine and aldehydes, via a retro-aldol mechanism. This Chloroflexus aggregans (strain MD-66 / DSM 9485) protein is Serine hydroxymethyltransferase.